Consider the following 133-residue polypeptide: DNA-directed RNA polymerases I, II, and III subunit rpabc2 (133 aa).

The span at 1–32 (MADFEGGGDDGGYEEFDEGGGFEEEYVEETET) shows a compositional bias: acidic residues. The interval 1-55 (MADFEGGGDDGGYEEFDEGGGFEEEYVEETETTEAYTDIIDPSADANTAEAGRIP) is disordered.

The protein belongs to the archaeal Rpo6/eukaryotic RPB6 RNA polymerase subunit family. Component of the RNA polymerase I (Pol I), RNA polymerase II (Pol II) and RNA polymerase III (Pol III) complexes consisting of at least 13, 12 and 17 subunits, respectively.

It is found in the nucleus. Its function is as follows. DNA-dependent RNA polymerases catalyze the transcription of DNA into RNA using the four ribonucleoside triphosphates as substrates. Common component of RNA polymerases I, II and III which synthesize ribosomal RNA precursors, mRNA precursors and many functional non-coding RNAs, and small RNAs, such as 5S rRNA and tRNAs, respectively. Pol II is the central component of the basal RNA polymerase II transcription machinery. Pols are composed of mobile elements that move relative to each other. In Pol II, RPB6 is part of the clamp element and together with parts of RPB1 and RPB2 forms a pocket to which the RPB4-RPB7 subcomplex binds. This chain is DNA-directed RNA polymerases I, II, and III subunit rpabc2 (polr2f), found in Dictyostelium discoideum (Social amoeba).